Here is a 664-residue protein sequence, read N- to C-terminus: NADH-ubiquinone oxidoreductase chain 5 (664 aa).

17 consecutive transmembrane segments (helical) span residues 2–22 (LLLT…LFGF), 28–48 (GSVF…LIII), 77–97 (FLFD…STLV), 120–140 (LFTF…MFVG), 168–188 (AMLV…TIFY), 210–230 (FIFF…IFIG), 250–270 (GPTP…GVYL), 285–305 (LKII…VGLV), 321–341 (LGYM…FHLS), 342–362 (NHAY…HAMG), 376–396 (ILPF…GFPF), 424–444 (LGTI…FFAF), 462–482 (PLEM…IGYI), 521–541 (LPVI…FFKF), 590–610 (IDKG…FSFL), 614–634 (IILL…ISTI), and 639–659 (IIFF…FLFI).

Belongs to the complex I subunit 5 family.

It is found in the mitochondrion inner membrane. It carries out the reaction a ubiquinone + NADH + 5 H(+)(in) = a ubiquinol + NAD(+) + 4 H(+)(out). Core subunit of the mitochondrial membrane respiratory chain NADH dehydrogenase (Complex I) that is believed to belong to the minimal assembly required for catalysis. Complex I functions in the transfer of electrons from NADH to the respiratory chain. The immediate electron acceptor for the enzyme is believed to be ubiquinone. The sequence is that of NADH-ubiquinone oxidoreductase chain 5 (ND5) from Phytophthora infestans (Potato late blight agent).